Consider the following 453-residue polypeptide: uncharacterized protein (453 aa).

Positions 1–23 (MFLLQRFFIYGLFLACFYTTVFG) are cleaved as a signal peptide. Topologically, residues 24–137 (EKHFEAEEYR…EKQFSYSSGT (114 aa)) are lumenal. A helical transmembrane segment spans residues 138-158 (NGILATFLTAIPPNIFILLVP). Residues 159-165 (KSFDTSM) are Cytoplasmic-facing. The chain crosses the membrane as a helical span at residues 166–186 (LNLFVAVSAGSLLGDVFLQLL). Residues 187 to 194 (PTVYSTNG) lie on the Lumenal side of the membrane. Residues 195-215 (GDFPASSVYSILIGALVFFLM) form a helical membrane-spanning segment. Residues 216–358 (DKGIRILIHE…LRNGYTKSQV (143 aa)) are Cytoplasmic-facing. The segment covering 229–238 (SLSKPKKDGE) has biased composition (basic and acidic residues). The interval 229–278 (SLSKPKKDGEETSSVNKPSASSTQTDVKGVEGLRKRNVKDDQNSKGHEPD) is disordered. The segment covering 240 to 254 (TSSVNKPSASSTQTD) has biased composition (polar residues). Residues 256 to 278 (KGVEGLRKRNVKDDQNSKGHEPD) are compositionally biased toward basic and acidic residues. A helical transmembrane segment spans residues 359 to 379 (LVLQMITMVTGLLGAIVATYI). At 380–399 (YTASSSSSPYGSFLLQLEDK) the chain is on the lumenal side. Residues 400-420 (LLPFTAGGFLYIAYLGVFPEL) traverse the membrane as a helical segment. Over 421-432 (LEINLSKGKLGN) the chain is Cytoplasmic. The helical transmembrane segment at 433–453 (MIYTALYMMFIVGGFSFLYYV) threads the bilayer.

Belongs to the ZIP transporter (TC 2.A.5) family. KE4/Catsup subfamily.

Its subcellular location is the endoplasmic reticulum membrane. This is an uncharacterized protein from Schizosaccharomyces pombe (strain 972 / ATCC 24843) (Fission yeast).